A 461-amino-acid polypeptide reads, in one-letter code: V-type ATP synthase beta chain (461 aa).

The protein belongs to the ATPase alpha/beta chains family.

Functionally, produces ATP from ADP in the presence of a proton gradient across the membrane. The V-type beta chain is a regulatory subunit. The chain is V-type ATP synthase beta chain from Clostridium botulinum (strain 657 / Type Ba4).